Reading from the N-terminus, the 565-residue chain is Periplasmic trehalase (565 aa).

The signal sequence occupies residues methionine 1–alanine 30. Residues arginine 152, tryptophan 159–aspartate 160, asparagine 196, arginine 205–glutamine 207, arginine 277–glutamate 279, and glycine 310 contribute to the substrate site. Catalysis depends on proton donor/acceptor residues aspartate 312 and glutamate 496. Glutamate 511 is a substrate binding site. The tract at residues proline 538–proline 565 is disordered. Positions threonine 548 to proline 565 are enriched in polar residues.

The protein belongs to the glycosyl hydrolase 37 family. In terms of assembly, monomer.

Its subcellular location is the periplasm. The enzyme catalyses alpha,alpha-trehalose + H2O = alpha-D-glucose + beta-D-glucose. In terms of biological role, provides the cells with the ability to utilize trehalose at high osmolarity by splitting it into glucose molecules that can subsequently be taken up by the phosphotransferase-mediated uptake system. In Escherichia coli O8 (strain IAI1), this protein is Periplasmic trehalase.